A 300-amino-acid polypeptide reads, in one-letter code: Ornithine carbamoyltransferase (300 aa).

Residues Ser50–Thr53, Gln77, Arg101, and His128–Gln131 contribute to the carbamoyl phosphate site. Residues Asn159, Asp219, and Ser223–Met224 contribute to the L-ornithine site. Carbamoyl phosphate is bound by residues Cys257–Leu258 and Arg285.

The protein belongs to the aspartate/ornithine carbamoyltransferase superfamily. OTCase family.

The protein localises to the cytoplasm. It carries out the reaction carbamoyl phosphate + L-ornithine = L-citrulline + phosphate + H(+). It functions in the pathway amino-acid degradation; L-arginine degradation via ADI pathway; carbamoyl phosphate from L-arginine: step 2/2. In terms of biological role, reversibly catalyzes the transfer of the carbamoyl group from carbamoyl phosphate (CP) to the N(epsilon) atom of ornithine (ORN) to produce L-citrulline. In Haloquadratum walsbyi (strain DSM 16790 / HBSQ001), this protein is Ornithine carbamoyltransferase.